Consider the following 120-residue polypeptide: Large ribosomal subunit protein uL14 (120 aa).

The protein belongs to the universal ribosomal protein uL14 family. In terms of assembly, part of the 50S ribosomal subunit. Forms a cluster with proteins L3 and L19. In the 70S ribosome, L14 and L19 interact and together make contacts with the 16S rRNA in bridges B5 and B8.

Functionally, binds to 23S rRNA. Forms part of two intersubunit bridges in the 70S ribosome. The chain is Large ribosomal subunit protein uL14 from Phytoplasma australiense.